The following is a 362-amino-acid chain: L-arginine:L-lysine amidinotransferase (362 aa).

Active-site residues include aspartate 195 and histidine 244. Residue cysteine 346 is the Amidino-cysteine intermediate of the active site.

Belongs to the amidinotransferase family.

The catalysed reaction is L-lysine + L-arginine = L-homoarginine + L-ornithine. It carries out the reaction L-canavanine + L-ornithine = L-canaline + L-arginine + H(+). Its function is as follows. Involved in the biosynthesis of phaseolotoxin, a nonhost-specific toxin which is a key component in the development of the halo blight disease of beans. Catalyzes the transfer of an amidino group from arginine to lysine to produce one molecule of homoarginine and one molecule of ornithine, both being precursors in the biosynthesis of phaseolotoxin. Can also use L-canavanine as an alternative amidine donor with L-ornithine as amidine acceptor. This Pseudomonas savastanoi pv. phaseolicola (Pseudomonas syringae pv. phaseolicola) protein is L-arginine:L-lysine amidinotransferase.